The primary structure comprises 443 residues: Probable D-serine dehydratase (443 aa).

Lys116 carries the N6-(pyridoxal phosphate)lysine modification.

Belongs to the serine/threonine dehydratase family. DsdA subfamily. It depends on pyridoxal 5'-phosphate as a cofactor.

It catalyses the reaction D-serine = pyruvate + NH4(+). This is Probable D-serine dehydratase from Bacillus cereus (strain AH187).